We begin with the raw amino-acid sequence, 459 residues long: Methionine aminopeptidase 2-1 (459 aa).

Residues 1-12 show a composition bias toward basic and acidic residues; sequence MGSKSPEDHRQG. Residues 1 to 79 form a disordered region; it reads MGSKSPEDHR…RKRNKKKSKK (79 aa). Residues 43–54 show a composition bias toward acidic residues; the sequence is GQDEDGDDDDDE. Residues 67–79 show a composition bias toward basic residues; that stretch reads KKKRKRNKKKSKK. Substrate is bound at residue His210. 3 residues coordinate a divalent metal cation: Asp231, Asp242, and His311. Substrate is bound at residue His319. A divalent metal cation contacts are provided by Glu344 and Glu440.

The protein belongs to the peptidase M24A family. Methionine aminopeptidase eukaryotic type 2 subfamily. Co(2+) is required as a cofactor. Requires Zn(2+) as cofactor. The cofactor is Mn(2+). It depends on Fe(2+) as a cofactor.

The protein resides in the cytoplasm. The enzyme catalyses Release of N-terminal amino acids, preferentially methionine, from peptides and arylamides.. In terms of biological role, cotranslationally removes the N-terminal methionine from nascent proteins. The N-terminal methionine is often cleaved when the second residue in the primary sequence is small and uncharged (Met-Ala-, Cys, Gly, Pro, Ser, Thr, or Val). This Pyrenophora tritici-repentis (strain Pt-1C-BFP) (Wheat tan spot fungus) protein is Methionine aminopeptidase 2-1.